The following is a 257-amino-acid chain: Small ribosomal subunit protein uS2 (257 aa).

Belongs to the universal ribosomal protein uS2 family.

The polypeptide is Small ribosomal subunit protein uS2 (Ruegeria pomeroyi (strain ATCC 700808 / DSM 15171 / DSS-3) (Silicibacter pomeroyi)).